Consider the following 129-residue polypeptide: Small ribosomal subunit protein uS11 (129 aa).

It belongs to the universal ribosomal protein uS11 family. In terms of assembly, part of the 30S ribosomal subunit. Interacts with proteins S7 and S18. Binds to IF-3.

In terms of biological role, located on the platform of the 30S subunit, it bridges several disparate RNA helices of the 16S rRNA. Forms part of the Shine-Dalgarno cleft in the 70S ribosome. In Rhizobium etli (strain CIAT 652), this protein is Small ribosomal subunit protein uS11.